Reading from the N-terminus, the 55-residue chain is Photosystem II reaction center X protein (55 aa).

A helical membrane pass occupies residues isoleucine 24 to tryptophan 44.

Belongs to the PsbX family. Type 2 subfamily. As to quaternary structure, PSII consists of a core antenna complex that captures photons, and an electron transfer chain that converts photonic excitation into a charge separation. PSII forms dimeric complexes.

The protein resides in the cellular thylakoid membrane. Functionally, involved in the binding and/or turnover of quinones at the Q(B) site of Photosystem II. The sequence is that of Photosystem II reaction center X protein from Prochlorococcus marinus (strain SARG / CCMP1375 / SS120).